We begin with the raw amino-acid sequence, 400 residues long: Probable glucan endo-1,6-beta-glucosidase B (400 aa).

A signal peptide spans 1-17 (MIRRLAALSALSGLATA). N30 carries an N-linked (GlcNAc...) asparagine glycan. The active-site Proton donor is E219. A glycan (N-linked (GlcNAc...) asparagine) is linked at N272. E320 acts as the Nucleophile in catalysis.

The protein belongs to the glycosyl hydrolase 5 (cellulase A) family.

Its subcellular location is the secreted. It catalyses the reaction Random hydrolysis of (1-&gt;6)-linkages in (1-&gt;6)-beta-D-glucans.. Its function is as follows. Beta-glucanases participate in the metabolism of beta-glucan, the main structural component of the cell wall. Acts on lutean, pustulan and 1,6-oligo-beta-D-glucosides. In Neosartorya fischeri (strain ATCC 1020 / DSM 3700 / CBS 544.65 / FGSC A1164 / JCM 1740 / NRRL 181 / WB 181) (Aspergillus fischerianus), this protein is Probable glucan endo-1,6-beta-glucosidase B (exgB).